The following is a 161-amino-acid chain: MAVEALHCGLNPRGIDHSAHADGIKLQIEGEGVESQSIKNRTFQKVPDQKGTPKRLQGEAETAKSATVKLSKPVALWTQQDVCKWLKKHCPNQYQLYSESFKQHDITGRALLRLTDKKLERMGIAQENQRQHILQQVLQLKVREEVRNLQLLTQASVECSP.

The segment at 44–64 is disordered; the sequence is QKVPDQKGTPKRLQGEAETAK. An SAM domain is found at 77 to 143; it reads WTQQDVCKWL…LQQVLQLKVR (67 aa).

This Mus musculus (Mouse) protein is Sterile alpha motif domain-containing protein 12 (Samd12).